The primary structure comprises 449 residues: Glutamyl-tRNA reductase (449 aa).

Residues 58 to 61, Ser-121, 126 to 128, and Gln-132 each bind substrate; these read TCNR and ETQ. Cys-59 acts as the Nucleophile in catalysis. Residue 203-208 coordinates NADP(+); it reads GLGEMA.

This sequence belongs to the glutamyl-tRNA reductase family. As to quaternary structure, homodimer.

It carries out the reaction (S)-4-amino-5-oxopentanoate + tRNA(Glu) + NADP(+) = L-glutamyl-tRNA(Glu) + NADPH + H(+). Its pathway is porphyrin-containing compound metabolism; protoporphyrin-IX biosynthesis; 5-aminolevulinate from L-glutamyl-tRNA(Glu): step 1/2. Catalyzes the NADPH-dependent reduction of glutamyl-tRNA(Glu) to glutamate 1-semialdehyde (GSA). This chain is Glutamyl-tRNA reductase, found in Helicobacter pylori (strain G27).